The sequence spans 393 residues: Staphopain B (393 aa).

A signal peptide spans Met1–Ala36. A propeptide spanning residues Asp37–Glu219 is cleaved from the precursor. Active-site residues include Cys243, His340, and Asn360.

It belongs to the peptidase C47 family. In the cytoplasm, prematurely activated/folded SspB forms a stable non-covalent complex with SspC. Post-translationally, proteolytically cleaved by staphylococcal serine protease (SspA).

Its subcellular location is the secreted. Its activity is regulated as follows. Prematurely activated/folded staphopain B is inhibited by staphostatin B (SspC), which is probably required to protect staphylococcal cytoplasmic proteins from degradation by SspB. Also inactivated by E-64 and stimulated by EDTA. Cysteine protease that plays an important role in the inhibition of host innate immune response. Degrades host elastin, fibrogen, fibronectin and kininogen. Blocks phagocytosis of opsonised S.aureus by neutrophils and monocytes by inducing their death in a proteolytic activity-dependent manner. Decreases surface expression of the 'don't eat me' signal CD31 on neutrophils. Cleaves host galectin-3/LGALS3, thereby inhibiting the neutrophil-activating ability of the lectin. The polypeptide is Staphopain B (sspB) (Staphylococcus aureus (strain NCTC 8325 / PS 47)).